A 492-amino-acid polypeptide reads, in one-letter code: Ribose import ATP-binding protein RbsA (492 aa).

2 ABC transporter domains span residues 3–239 (IEMK…VGRS) and 249–492 (AEIR…TGGK). Residue 35-42 (GENGAGKS) coordinates ATP.

The protein belongs to the ABC transporter superfamily. Ribose importer (TC 3.A.1.2.1) family. In terms of assembly, the complex is composed of an ATP-binding protein (RbsA), two transmembrane proteins (RbsC) and a solute-binding protein (RbsB).

It is found in the cell membrane. The enzyme catalyses D-ribose(out) + ATP + H2O = D-ribose(in) + ADP + phosphate + H(+). Functionally, part of the ABC transporter complex RbsABC involved in ribose import. Responsible for energy coupling to the transport system. This chain is Ribose import ATP-binding protein RbsA, found in Lactococcus lactis subsp. cremoris (strain SK11).